A 128-amino-acid polypeptide reads, in one-letter code: MLNSRFPVSVKKSHSLRERKVFTTILQSKTRFFGTFINAYFIKNNHSTWRVAISIAKTKYKLAVQRNLIKRQIRSIFQQISNNLEPWDILVIVNKGFIELTFKEKQKLFLQLLKRIKEVDAYQTSANK.

It belongs to the RnpA family. As to quaternary structure, consists of a catalytic RNA component (M1 or rnpB) and a protein subunit.

The enzyme catalyses Endonucleolytic cleavage of RNA, removing 5'-extranucleotides from tRNA precursor.. Its function is as follows. RNaseP catalyzes the removal of the 5'-leader sequence from pre-tRNA to produce the mature 5'-terminus. It can also cleave other RNA substrates such as 4.5S RNA. The protein component plays an auxiliary but essential role in vivo by binding to the 5'-leader sequence and broadening the substrate specificity of the ribozyme. This chain is Ribonuclease P protein component, found in Mycoplasma genitalium (strain ATCC 33530 / DSM 19775 / NCTC 10195 / G37) (Mycoplasmoides genitalium).